Consider the following 359-residue polypeptide: Trans-enoyl reductase mpsG (359 aa).

NADP(+) contacts are provided by tyrosine 212, leucine 259, and threonine 278.

The protein belongs to the zinc-containing alcohol dehydrogenase family. Monomer.

It participates in secondary metabolite biosynthesis. Its function is as follows. Trans-enoyl reductase; part of the gene cluster that mediates the biosynthesis of macrophasetins, 3-decalinoyltetramic acids (DTAs) which feature a tetramate (pyrrolidine-2,4-dione) unit connected to a decalin fragment and that have potent bioactivities. The PKS-NRPS mpsA together with its associated enoylreductase partner mpsG incorporate one unit of acetyl-CoA, seven units of malonyl-CoA, and one unit of L-alanine to assemble the linear tetramic acid intermediate corresponding to the backbone of macrophasetins. Without the Diels-Alderase mpsD, the mpsA/G product can undergo the non-enzymatic intramolecular Diels-Alder (IMDA) reaction to generate both macrophasetin A and macrophasetin B. Catalyzed by mpsD, the linear tetramic acid intermediate is thoroughly converted to macrophasetin A via the endo-IMDA reaction in a regioselective and stereoselective manner. Finally, the cytochrome P450 monooxygenase mpsF catalyzes the hydroxylation at C20 to yield the end product macrophasetin C. The sequence is that of Trans-enoyl reductase mpsG from Macrophomina phaseolina (strain MS6) (Charcoal rot fungus).